The following is a 397-amino-acid chain: Homocysteine-responsive endoplasmic reticulum-resident ubiquitin-like domain member 2 protein (397 aa).

Residues 10-89 (VTLVIKAPNQ…HMVHLVCASR (80 aa)) form the Ubiquitin-like domain. Disordered stretches follow at residues 87–166 (ASRS…MQGG) and 210–246 (APSPSLSAGPATQPVQPNEPAAPMGPNPAPEDRPANP). Composition is skewed to low complexity over residues 88–123 (SRSPPSSPTSDSHFSTTDSSSSTSDSAGPSLSSTPS) and 210–220 (APSPSLSAGPA). The helical transmembrane segment at 293-313 (FVMVIGAMLLVYLHQAGWFPF) threads the bilayer. Residues 344–373 (DEGIEDDEGDSGEEGPDDPMNPGPHQPGFL) form a disordered region. The segment covering 345-360 (EGIEDDEGDSGEEGPD) has biased composition (acidic residues).

Its subcellular location is the membrane. Functionally, could be involved in the unfolded protein response (UPR) pathway. The chain is Homocysteine-responsive endoplasmic reticulum-resident ubiquitin-like domain member 2 protein (herpud2) from Danio rerio (Zebrafish).